The sequence spans 206 residues: HTH-type transcriptional regulator BetI (206 aa).

In terms of domain architecture, HTH tetR-type spans 8–68 (PLRRKALVDA…ETIRSLLRDL (61 aa)). Residues 31-50 (TMSDIAREAGVSAALAHHYF) constitute a DNA-binding region (H-T-H motif).

It functions in the pathway amine and polyamine biosynthesis; betaine biosynthesis via choline pathway [regulation]. Repressor involved in the biosynthesis of the osmoprotectant glycine betaine. It represses transcription of the choline transporter BetT and the genes of BetAB involved in the synthesis of glycine betaine. The polypeptide is HTH-type transcriptional regulator BetI (Agrobacterium fabrum (strain C58 / ATCC 33970) (Agrobacterium tumefaciens (strain C58))).